Reading from the N-terminus, the 219-residue chain is Ras-related protein RABA5d (219 aa).

Position 2 is an N-acetylserine (Ser-2). Position 19-26 (19-26 (GDSAVGKS)) interacts with GTP. The Effector region signature appears at 41–49 (SKATIGVEF). GTP-binding positions include 67–71 (DTAGQ), 125–128 (NKCD), and 155–156 (SA). Residues Cys-215 and Cys-216 are each lipidated (S-geranylgeranyl cysteine).

This sequence belongs to the small GTPase superfamily. Rab family.

The protein localises to the cell membrane. Functionally, intracellular vesicle trafficking and protein transport. This chain is Ras-related protein RABA5d (RABA5D), found in Arabidopsis thaliana (Mouse-ear cress).